The sequence spans 962 residues: Glutamate receptor 1 (962 aa).

Residues 1 to 25 (MFSSFSFLNMFGVLFTVFNLTVVQP) form the signal peptide. Over 26–591 (YPSHIIIKSF…SVFSFMQPLS (566 aa)) the chain is Extracellular. Residues asparagine 190, asparagine 220, asparagine 275, asparagine 333, asparagine 441, and asparagine 482 are each glycosylated (N-linked (GlcNAc...) asparagine). A helical transmembrane segment spans residues 592–612 (TEIWMYIIFAYIGVSVVIFLV). Residues 613-668 (SRFSPYEWRVEETSRGGFTISNDFSVYNCLWFTLAAFMQQGTDILPRSISGRIASS) lie on the Cytoplasmic side of the membrane. Residues 669 to 689 (AWWFFTMIIVSSYTANLAAFL) traverse the membrane as a helical segment. The Extracellular portion of the chain corresponds to 690 to 855 (TLEKMQAPIE…GSSASLNLSK (166 aa)). Residue asparagine 852 is glycosylated (N-linked (GlcNAc...) asparagine). Residues 856-876 (VAGIFYILMGGMVISMLAALG) form a helical membrane-spanning segment. Residues 877–962 (EFLYRSRIEA…PANTLYNTAV (86 aa)) lie on the Cytoplasmic side of the membrane.

It belongs to the glutamate-gated ion channel (TC 1.A.10.1) family. As to quaternary structure, interacts with sol-1. Interacts with cni-1; the interaction negatively regulates export of glr-1 from the endoplasmic reticulum to synapses. Interacts with usp-46; the interaction results in deubiquitination of glr-1. In terms of processing, ubiquitinated. Deubiquitinated by usp-46 which prevents its degradation. Glycosylated. In terms of tissue distribution, command interneurons of the locomotory control circuit (AIB, AVA, AVB, AVD, AVE and PVC) and motor neurons (RMD, RIM, SMD, AVG, PVQ and URY).

It is found in the postsynaptic cell membrane. The protein localises to the endoplasmic reticulum. The protein resides in the synapse. Its subcellular location is the cell membrane. It localises to the recycling endosome. It is found in the cell projection. The protein localises to the dendrite. The protein resides in the perikaryon. Functionally, non-NMDA (N-methyl-D-aspartate) ionotropic glutamate receptor. L-glutamate acts as an excitatory neurotransmitter at many synapses in the central nervous system. The postsynaptic actions of glutamate are mediated by a variety of receptors that are named according to their selective agonists. May contribute to a sensory discrimination between mechanical and chemical stimuli. Plays a role in controlling movement in response to environmental cues such as food availability and mechanosensory stimulation such as the nose touch response. In AIB interneurons, promotes omega turns, a movement that frequently follows backwards locomotion or 'reversals' in response to environmental cues while possibly playing an inhibitory role in alternative neurons to inhibit omega turns. This chain is Glutamate receptor 1, found in Caenorhabditis elegans.